The sequence spans 311 residues: Cytosolic Fe-S cluster assembly factor Nubp1 homolog (311 aa).

[4Fe-4S] cluster contacts are provided by Cys9, Cys23, Cys26, and Cys32. Residue 63–70 coordinates ATP; that stretch reads GKGGVGKS. [4Fe-4S] cluster contacts are provided by Cys240 and Cys243.

Belongs to the Mrp/NBP35 ATP-binding proteins family. NUBP1/NBP35 subfamily. Heterotetramer of 2 Nubp1 and 2 Nubp2 chains. [4Fe-4S] cluster serves as cofactor.

Its subcellular location is the cytoplasm. Component of the cytosolic iron-sulfur (Fe/S) protein assembly (CIA) machinery. Required for maturation of extramitochondrial Fe-S proteins. The Nubp1-Nubp2 heterotetramer forms a Fe-S scaffold complex, mediating the de novo assembly of an Fe-S cluster and its transfer to target apoproteins. The sequence is that of Cytosolic Fe-S cluster assembly factor Nubp1 homolog from Drosophila erecta (Fruit fly).